We begin with the raw amino-acid sequence, 297 residues long: Protein AKTIP homolog (297 aa).

The tract at residues 13–75 (FLSDLDEKSS…QRSPSGSSPE (63 aa)) is disordered. Basic and acidic residues predominate over residues 17–42 (LDEKSSSSPHDEKKPGDGREVREEKS). The segment covering 59–75 (MNLSIARQRSPSGSSPE) has biased composition (polar residues). Positions 84-232 (FLEYTLMAEY…VNECLRRCHN (149 aa)) constitute a UBC core domain.

Belongs to the ubiquitin-conjugating enzyme family. FTS subfamily.

In Nematostella vectensis (Starlet sea anemone), this protein is Protein AKTIP homolog.